A 356-amino-acid chain; its full sequence is Phospho-N-acetylmuramoyl-pentapeptide-transferase (356 aa).

10 helical membrane passes run 3 to 23 (QILF…PLLI), 51 to 71 (TMGG…AKVI), 80 to 100 (GLLV…DDYI), 114 to 134 (AKMA…LQFP), 152 to 172 (FGWS…ILAM), 185 to 205 (LATG…LWQF), 227 to 247 (PLDL…FLWW), 254 to 274 (IFMG…LAIL), 279 to 299 (FLLA…VIQV), and 333 to 353 (FWII…AGWA).

It belongs to the glycosyltransferase 4 family. MraY subfamily. The cofactor is Mg(2+).

The protein localises to the cell membrane. The enzyme catalyses UDP-N-acetyl-alpha-D-muramoyl-L-alanyl-gamma-D-glutamyl-meso-2,6-diaminopimeloyl-D-alanyl-D-alanine + di-trans,octa-cis-undecaprenyl phosphate = di-trans,octa-cis-undecaprenyl diphospho-N-acetyl-alpha-D-muramoyl-L-alanyl-D-glutamyl-meso-2,6-diaminopimeloyl-D-alanyl-D-alanine + UMP. It functions in the pathway cell wall biogenesis; peptidoglycan biosynthesis. Catalyzes the initial step of the lipid cycle reactions in the biosynthesis of the cell wall peptidoglycan: transfers peptidoglycan precursor phospho-MurNAc-pentapeptide from UDP-MurNAc-pentapeptide onto the lipid carrier undecaprenyl phosphate, yielding undecaprenyl-pyrophosphoryl-MurNAc-pentapeptide, known as lipid I. This chain is Phospho-N-acetylmuramoyl-pentapeptide-transferase, found in Streptomyces griseus subsp. griseus (strain JCM 4626 / CBS 651.72 / NBRC 13350 / KCC S-0626 / ISP 5235).